A 315-amino-acid chain; its full sequence is Rhomboid-related protein 4 (315 aa).

The Cytoplasmic segment spans residues 1 to 21 (MQRRSRGINTGLILLLSQIFH). Residues 22 to 42 (VGINNIPPVTLATLALNIWFF) traverse the membrane as a helical segment. Topologically, residues 43–106 (LNPQKPLYSS…RRLGSRWFAY (64 aa)) are extracellular. The chain crosses the membrane as a helical span at residues 107–127 (VITAFSVLTGVVYLLLQFAVA). Residues 128-138 (EFMDEPDFKRS) are Cytoplasmic-facing. The chain crosses the membrane as a helical span at residues 139 to 157 (CAVGFSGVLFALKVLNNHY). S144 serves as the catalytic Nucleophile. Topologically, residues 158-180 (CPGGFVNILGFPVPNRFACWVEL) are extracellular. Residues 181-201 (VAIHLFSPGTSFAGHLAGILV) traverse the membrane as a helical segment. H195 is an active-site residue. Over 202–315 (GLMYTQGPLK…RQRLHRFDSQ (114 aa)) the chain is Cytoplasmic. The tract at residues 269 to 284 (SEEEQLERALQASLWD) is ubiquitin-binding domain (UBD). A disordered region spans residues 283–315 (WDRGNTRNSPPPYGFHLSPEEMRRQRLHRFDSQ). The span at 300 to 315 (SPEEMRRQRLHRFDSQ) shows a compositional bias: basic and acidic residues. The VCP/p97-interacting motif (VIM) stretch occupies residues 301–315 (PEEMRRQRLHRFDSQ).

The protein belongs to the peptidase S54 family. As to quaternary structure, interacts (via C-terminal domain) with VCP. Interacts with ubiquitin and ubiquitinated proteins. Interacts with BIK and STEAP3. Expressed strongly in testis.

Its subcellular location is the endoplasmic reticulum membrane. It localises to the mitochondrion membrane. It carries out the reaction Cleaves type-1 transmembrane domains using a catalytic dyad composed of serine and histidine that are contributed by different transmembrane domains.. With respect to regulation, inhibited by aprotinin. Its function is as follows. Intramembrane-cleaving serine protease that cleaves single transmembrane or multi-pass membrane proteins in the hydrophobic plane of the membrane, luminal loops and juxtamembrane regions. Involved in regulated intramembrane proteolysis and the subsequent release of functional polypeptides from their membrane anchors. Functional component of endoplasmic reticulum-associated degradation (ERAD) for misfolded membrane proteins. Required for the degradation process of some specific misfolded endoplasmic reticulum (ER) luminal proteins. Participates in the transfer of misfolded proteins from the ER to the cytosol, where they are destroyed by the proteasome in a ubiquitin-dependent manner. Functions in BIK, MPZ, PKD1, PTCRA, RHO, STEAP3 and TRAC processing. Involved in the regulation of exosomal secretion; inhibits the TSAP6-mediated secretion pathway. Involved in the regulation of apoptosis; modulates BIK-mediated apoptotic activity. Also plays a role in the regulation of spermatogenesis; inhibits apoptotic activity in spermatogonia. The chain is Rhomboid-related protein 4 (RHBDD1) from Homo sapiens (Human).